The sequence spans 497 residues: Glutamyl-tRNA reductase (497 aa).

Substrate is bound by residues T58–R61, S118, E123–Q125, and Q129. The active-site Nucleophile is the C59. Residue G214–A219 coordinates NADP(+). Over residues V461 to T477 the composition is skewed to polar residues. The tract at residues V461–S486 is disordered.

This sequence belongs to the glutamyl-tRNA reductase family. As to quaternary structure, homodimer.

The catalysed reaction is (S)-4-amino-5-oxopentanoate + tRNA(Glu) + NADP(+) = L-glutamyl-tRNA(Glu) + NADPH + H(+). It functions in the pathway porphyrin-containing compound metabolism; protoporphyrin-IX biosynthesis; 5-aminolevulinate from L-glutamyl-tRNA(Glu): step 1/2. Its function is as follows. Catalyzes the NADPH-dependent reduction of glutamyl-tRNA(Glu) to glutamate 1-semialdehyde (GSA). The chain is Glutamyl-tRNA reductase from Corynebacterium jeikeium (strain K411).